Consider the following 202-residue polypeptide: Large ribosomal subunit protein mL40 (202 aa).

Residues 42–79 (IQHQQTASYASKGKSGPPAGMFSGQKAGSKKSKGPKQV) are disordered.

Belongs to the mitochondrion-specific ribosomal protein mL40 family. In terms of assembly, component of the mitochondrial large ribosomal subunit (mt-LSU). Mature N.crassa 74S mitochondrial ribosomes consist of a small (37S) and a large (54S) subunit. The 37S small subunit contains a 16S ribosomal RNA (16S mt-rRNA) and 32 different proteins. The 54S large subunit contains a 23S rRNA (23S mt-rRNA) and 42 different proteins. mL40 is binding to NAD.

It is found in the mitochondrion. In terms of biological role, component of the mitochondrial ribosome (mitoribosome), a dedicated translation machinery responsible for the synthesis of mitochondrial genome-encoded proteins, including at least some of the essential transmembrane subunits of the mitochondrial respiratory chain. The mitoribosomes are attached to the mitochondrial inner membrane and translation products are cotranslationally integrated into the membrane. This chain is Large ribosomal subunit protein mL40 (mrpl28), found in Neurospora crassa (strain ATCC 24698 / 74-OR23-1A / CBS 708.71 / DSM 1257 / FGSC 987).